Consider the following 354-residue polypeptide: Rhodopsin (354 aa).

Residues 1–36 are Extracellular-facing; that stretch reads MNGTEGENFYIPMSNKTGVVRSPFDYPQYYLAEPWK. Residues N2 and N15 are each glycosylated (N-linked (GlcNAc...) asparagine). Residues 37 to 61 traverse the membrane as a helical segment; that stretch reads FSVLAAYMFFLIIAGFPVNFLTLYV. At 62–73 the chain is on the cytoplasmic side; it reads TIQHKKLRQPLN. Residues 74–96 form a helical membrane-spanning segment; it reads YILLNLAVADLFMIFGGFPSTMI. The Extracellular segment spans residues 97–110; it reads TSMNGYFVFGPSGC. Residues C110 and C187 are joined by a disulfide bond. The helical transmembrane segment at 111-133 threads the bilayer; sequence NFEGFFATLGGEIGLWSLVVLAI. The 'Ionic lock' involved in activated form stabilization signature appears at 134–136; that stretch reads ERY. The Cytoplasmic segment spans residues 134-152; the sequence is ERYVVVCKPMSNFRFGSQH. A helical transmembrane segment spans residues 153 to 173; it reads AFMGVGLTWIMAMACAFPPLV. Topologically, residues 174–202 are extracellular; it reads GWSRYIPEGMQCSCGIDYYTLKPEVNNES. The N-linked (GlcNAc...) asparagine glycan is linked to N200. A helical transmembrane segment spans residues 203 to 224; it reads FVIYMFVVHFSIPLTIIFFCYG. Residues 225 to 252 lie on the Cytoplasmic side of the membrane; the sequence is RLVCTVKEAAAQQQESETTQRAEREVTR. A helical transmembrane segment spans residues 253-274; sequence MVIIMVIAFLICWLPYASVAFF. Residues 275-286 are Extracellular-facing; sequence IFCNQGSEFGPI. Residues 287–308 traverse the membrane as a helical segment; it reads FMTIPAFFAKAASLYNPLIYIL. K296 carries the N6-(retinylidene)lysine modification. Topologically, residues 309-354 are cytoplasmic; it reads MNKQFRNCMITTICCGKNPFEEEESTSASASKTEASSVSSSQVAPA. Residues C322 and C323 are each lipidated (S-palmitoyl cysteine). Residues 333-354 are disordered; that stretch reads STSASASKTEASSVSSSQVAPA. Residues 334–354 show a composition bias toward low complexity; sequence TSASASKTEASSVSSSQVAPA.

This sequence belongs to the G-protein coupled receptor 1 family. Opsin subfamily. Post-translationally, phosphorylated on some or all of the serine and threonine residues present in the C-terminal region. Contains one covalently linked retinal chromophore.

The protein resides in the membrane. It localises to the cell projection. It is found in the cilium. Its subcellular location is the photoreceptor outer segment. Photoreceptor required for image-forming vision at low light intensity. While most salt water fish species use retinal as chromophore, most freshwater fish use 3-dehydroretinal, or a mixture of retinal and 3-dehydroretinal. Light-induced isomerization of 11-cis to all-trans retinal triggers a conformational change that activates signaling via G-proteins. Subsequent receptor phosphorylation mediates displacement of the bound G-protein alpha subunit by arrestin and terminates signaling. This is Rhodopsin (rho) from Scyliorhinus canicula (Small-spotted catshark).